We begin with the raw amino-acid sequence, 147 residues long: Cell division protein SepF 1 (147 aa).

It belongs to the SepF family. As to quaternary structure, homodimer. Interacts with FtsZ.

It localises to the cytoplasm. Cell division protein that is part of the divisome complex and is recruited early to the Z-ring. Probably stimulates Z-ring formation, perhaps through the cross-linking of FtsZ protofilaments. Its function overlaps with FtsA. This is Cell division protein SepF 1 from Desulforamulus reducens (strain ATCC BAA-1160 / DSM 100696 / MI-1) (Desulfotomaculum reducens).